The primary structure comprises 352 residues: Uroporphyrinogen decarboxylase (352 aa).

Substrate-binding positions include 29–33, phenylalanine 48, aspartate 78, tyrosine 154, serine 209, and histidine 322; that span reads RQAGR.

Belongs to the uroporphyrinogen decarboxylase family. As to quaternary structure, homodimer.

The protein resides in the cytoplasm. It catalyses the reaction uroporphyrinogen III + 4 H(+) = coproporphyrinogen III + 4 CO2. The protein operates within porphyrin-containing compound metabolism; protoporphyrin-IX biosynthesis; coproporphyrinogen-III from 5-aminolevulinate: step 4/4. In terms of biological role, catalyzes the decarboxylation of four acetate groups of uroporphyrinogen-III to yield coproporphyrinogen-III. This Bacillus pumilus (strain SAFR-032) protein is Uroporphyrinogen decarboxylase.